Here is an 813-residue protein sequence, read N- to C-terminus: Lon protease (813 aa).

Residues Leu14–Met207 enclose the Lon N-terminal domain. Gly359–Thr366 is an ATP binding site. Residues Glu595–Glu776 enclose the Lon proteolytic domain. Active-site residues include Ser682 and Lys725.

Belongs to the peptidase S16 family. As to quaternary structure, homohexamer. Organized in a ring with a central cavity.

The protein resides in the cytoplasm. The catalysed reaction is Hydrolysis of proteins in presence of ATP.. Its function is as follows. ATP-dependent serine protease that mediates the selective degradation of mutant and abnormal proteins as well as certain short-lived regulatory proteins. Required for cellular homeostasis and for survival from DNA damage and developmental changes induced by stress. Degrades polypeptides processively to yield small peptide fragments that are 5 to 10 amino acids long. Binds to DNA in a double-stranded, site-specific manner. The chain is Lon protease from Heliobacterium modesticaldum (strain ATCC 51547 / Ice1).